The primary structure comprises 612 residues: Probable methyltransferase PMT9 (612 aa).

The Cytoplasmic segment spans residues 1–14 (MKHFRTERVRATPK). Residues 15-35 (LFTYVLVGFIALLGLTCLYYG) form a helical; Signal-anchor for type II membrane protein membrane-spanning segment. The Lumenal segment spans residues 36 to 612 (SSFAPGSRKS…LWSLPAISVS (577 aa)). N-linked (GlcNAc...) asparagine glycans are attached at residues Asn-107, Asn-383, and Asn-562.

This sequence belongs to the methyltransferase superfamily.

It is found in the golgi apparatus membrane. The protein is Probable methyltransferase PMT9 of Arabidopsis thaliana (Mouse-ear cress).